The sequence spans 240 residues: Pyridoxine 5'-phosphate synthase (240 aa).

Asn-7 contacts 3-amino-2-oxopropyl phosphate. 9–10 (DH) is a binding site for 1-deoxy-D-xylulose 5-phosphate. 3-amino-2-oxopropyl phosphate is bound at residue Arg-18. Catalysis depends on His-43, which acts as the Proton acceptor. 1-deoxy-D-xylulose 5-phosphate-binding residues include Arg-45 and His-50. Glu-70 serves as the catalytic Proton acceptor. Position 100 (Thr-100) interacts with 1-deoxy-D-xylulose 5-phosphate. The active-site Proton donor is His-191. Residues Gly-192 and 213–214 (GH) each bind 3-amino-2-oxopropyl phosphate.

Belongs to the PNP synthase family. In terms of assembly, homooctamer; tetramer of dimers.

The protein resides in the cytoplasm. It carries out the reaction 3-amino-2-oxopropyl phosphate + 1-deoxy-D-xylulose 5-phosphate = pyridoxine 5'-phosphate + phosphate + 2 H2O + H(+). It participates in cofactor biosynthesis; pyridoxine 5'-phosphate biosynthesis; pyridoxine 5'-phosphate from D-erythrose 4-phosphate: step 5/5. Functionally, catalyzes the complicated ring closure reaction between the two acyclic compounds 1-deoxy-D-xylulose-5-phosphate (DXP) and 3-amino-2-oxopropyl phosphate (1-amino-acetone-3-phosphate or AAP) to form pyridoxine 5'-phosphate (PNP) and inorganic phosphate. The sequence is that of Pyridoxine 5'-phosphate synthase from Cyanothece sp. (strain PCC 7425 / ATCC 29141).